Here is a 273-residue protein sequence, read N- to C-terminus: Putative pyruvate, phosphate dikinase regulatory protein (273 aa).

ADP is bound at residue 149–156 (GPSRTSKT).

This sequence belongs to the pyruvate, phosphate/water dikinase regulatory protein family. PDRP subfamily.

It catalyses the reaction N(tele)-phospho-L-histidyl/L-threonyl-[pyruvate, phosphate dikinase] + ADP = N(tele)-phospho-L-histidyl/O-phospho-L-threonyl-[pyruvate, phosphate dikinase] + AMP + H(+). The catalysed reaction is N(tele)-phospho-L-histidyl/O-phospho-L-threonyl-[pyruvate, phosphate dikinase] + phosphate + H(+) = N(tele)-phospho-L-histidyl/L-threonyl-[pyruvate, phosphate dikinase] + diphosphate. In terms of biological role, bifunctional serine/threonine kinase and phosphorylase involved in the regulation of the pyruvate, phosphate dikinase (PPDK) by catalyzing its phosphorylation/dephosphorylation. This Rickettsia akari (strain Hartford) protein is Putative pyruvate, phosphate dikinase regulatory protein.